Consider the following 235-residue polypeptide: 1-(5-phosphoribosyl)-5-[(5-phosphoribosylamino)methylideneamino] imidazole-4-carboxamide isomerase (235 aa).

The active-site Proton acceptor is the D8. D128 serves as the catalytic Proton donor.

Belongs to the HisA/HisF family.

Its subcellular location is the cytoplasm. The catalysed reaction is 1-(5-phospho-beta-D-ribosyl)-5-[(5-phospho-beta-D-ribosylamino)methylideneamino]imidazole-4-carboxamide = 5-[(5-phospho-1-deoxy-D-ribulos-1-ylimino)methylamino]-1-(5-phospho-beta-D-ribosyl)imidazole-4-carboxamide. The protein operates within amino-acid biosynthesis; L-histidine biosynthesis; L-histidine from 5-phospho-alpha-D-ribose 1-diphosphate: step 4/9. The protein is 1-(5-phosphoribosyl)-5-[(5-phosphoribosylamino)methylideneamino] imidazole-4-carboxamide isomerase of Thermus thermophilus (strain ATCC 27634 / DSM 579 / HB8).